A 464-amino-acid chain; its full sequence is UDP-N-acetylmuramate--L-alanine ligase (464 aa).

118–124 lines the ATP pocket; it reads GTHGKTT.

This sequence belongs to the MurCDEF family.

It localises to the cytoplasm. It carries out the reaction UDP-N-acetyl-alpha-D-muramate + L-alanine + ATP = UDP-N-acetyl-alpha-D-muramoyl-L-alanine + ADP + phosphate + H(+). It participates in cell wall biogenesis; peptidoglycan biosynthesis. Functionally, cell wall formation. This is UDP-N-acetylmuramate--L-alanine ligase from Dinoroseobacter shibae (strain DSM 16493 / NCIMB 14021 / DFL 12).